Here is a 1150-residue protein sequence, read N- to C-terminus: Rho-type GTPase-activating protein 1 (1150 aa).

Over residues 1 to 10 the composition is skewed to basic and acidic residues; sequence MSQRDAKKDG. Residues 1–78 are disordered; it reads MSQRDAKKDG…AESRKALPNQ (78 aa). Residues 40–62 are compositionally biased toward polar residues; that stretch reads TTKNFPHSRHTSTVAGTEGGSSL. 3 LIM zinc-binding domains span residues 114–177, 178–238, and 483–546; these read KICA…RRLD, LLCA…LFAA, and DLCY…SSNV. Residues 586-683 are disordered; it reads SQRKPLSVDP…SHGGSITGKS (98 aa). The span at 598–617 shows a compositional bias: polar residues; the sequence is ENVSSTVETAKQAETTASSD. Residues 642 to 655 show a composition bias toward low complexity; sequence SNETQSSSNSTETS. Phosphoserine is present on S690. The disordered stretch occupies residues 726-759; sequence AFRHMPSYTDPSYRKNSGAIYDKNDGTQKGLTPK. Residues 837–1038 enclose the Rho-GAP domain; sequence VPLEILVERN…LLIENFEKFC (202 aa). Disordered regions lie at residues 1078–1097 and 1104–1150; these read LDER…RQPI and LTSD…IRDS. Basic residues predominate over residues 1088 to 1097; the sequence is ASTKRKRQPI. Polar residues predominate over residues 1104–1134; the sequence is LTSDVPSGSEVADTNSLSSTTKDEASPNSDA.

The protein localises to the cell tip. Its subcellular location is the nucleus. GTPase-activating protein for Rho1. Involved in the F-actin patch localization, cell morphogenesis, regulation of septation, and cell wall synthesis. The sequence is that of Rho-type GTPase-activating protein 1 (rga1) from Schizosaccharomyces pombe (strain 972 / ATCC 24843) (Fission yeast).